The following is a 51-amino-acid chain: uncharacterized protein (51 aa).

A run of 2 helical transmembrane segments spans residues L6–D26 and S28–L48.

Its subcellular location is the host membrane. This is an uncharacterized protein from Enterobacteria phage T4 (Bacteriophage T4).